A 194-amino-acid chain; its full sequence is Peptidyl-tRNA hydrolase (194 aa).

Y16 contacts tRNA. H21 functions as the Proton acceptor in the catalytic mechanism. 3 residues coordinate tRNA: F66, N68, and N114.

It belongs to the PTH family. As to quaternary structure, monomer.

It is found in the cytoplasm. The catalysed reaction is an N-acyl-L-alpha-aminoacyl-tRNA + H2O = an N-acyl-L-amino acid + a tRNA + H(+). Its function is as follows. Hydrolyzes ribosome-free peptidyl-tRNAs (with 1 or more amino acids incorporated), which drop off the ribosome during protein synthesis, or as a result of ribosome stalling. Catalyzes the release of premature peptidyl moieties from peptidyl-tRNA molecules trapped in stalled 50S ribosomal subunits, and thus maintains levels of free tRNAs and 50S ribosomes. In Geobacter metallireducens (strain ATCC 53774 / DSM 7210 / GS-15), this protein is Peptidyl-tRNA hydrolase.